The following is a 594-amino-acid chain: UvrABC system protein C (594 aa).

One can recognise a GIY-YIG domain in the interval 13–99; it reads HSSGVYQYFD…IKQLKPKYNI (87 aa). In terms of domain architecture, UVR spans 205 to 240; it reads DKLIKELELKMERLSNNLRFEEALIYRDRIAKIQKI.

Belongs to the UvrC family. As to quaternary structure, interacts with UvrB in an incision complex.

The protein localises to the cytoplasm. In terms of biological role, the UvrABC repair system catalyzes the recognition and processing of DNA lesions. UvrC both incises the 5' and 3' sides of the lesion. The N-terminal half is responsible for the 3' incision and the C-terminal half is responsible for the 5' incision. The chain is UvrABC system protein C from Helicobacter pylori (strain Shi470).